The following is a 538-amino-acid chain: Importin subunit alpha-6 (538 aa).

In terms of domain architecture, IBB spans 1–58 (MSYKPSAKTEVRRNRYKVSVDADEGRRRREDNMVEIRKNKREENLQKKRREGFNPSMA). A disordered region spans residues 1–69 (MSYKPSAKTE…QPGQDFSSSL (69 aa)). The span at 7-46 (AKTEVRRNRYKVSVDADEGRRRREDNMVEIRKNKREENLQ) shows a compositional bias: basic and acidic residues. Over residues 56 to 69 (SMASQPGQDFSSSL) the composition is skewed to polar residues. ARM repeat units follow at residues 109-149 (NPPI…NIAS), 152-191 (SENT…NVAG), 194-234 (PKCR…NFCR), 236-275 (KPQP…YLSD), 278-317 (NEKI…NIVT), 320-360 (DIQT…NITA), 363-402 (TSQI…NATS), and 406-445 (HDQI…NILK).

This sequence belongs to the importin alpha family. As to quaternary structure, forms a complex with importin subunit beta-1.

The protein localises to the nucleus envelope. Functionally, binds to conventional NLS motifs and mediates nuclear protein import across the nuclear envelope. Acts as a cellular receptor for the nuclear import of the virD2 protein of Agrobacterium, but is not essential for Agrobacterium-mediated root transformation. In Arabidopsis thaliana (Mouse-ear cress), this protein is Importin subunit alpha-6.